A 212-amino-acid chain; its full sequence is Nucleoredoxin-like protein 1 (212 aa).

Residues 1–164 (MASLFSGRIL…AAEVLDRNFQ (164 aa)) enclose the Thioredoxin domain. The segment at 191 to 212 (AARGGRDPGGGGGEEGGAGGLF) is disordered. Gly residues predominate over residues 197–212 (DPGGGGGEEGGAGGLF).

It belongs to the nucleoredoxin family. As to quaternary structure, interacts with isoform 1 of BSG.

It is found in the cell projection. It localises to the cilium. The protein resides in the photoreceptor outer segment. In terms of biological role, plays an important role in retinal cone photoreceptor survival. In association with glucose transporter SLC16A1/GLUT1 and BSG, promotes retinal cone survival by enhancing aerobic glycolysis and accelerating the entry of glucose into photoreceptors. May play a role in cone cell viability, slowing down cone degeneration, does not seem to play a role in degenerating rods. In Homo sapiens (Human), this protein is Nucleoredoxin-like protein 1 (NXNL1).